Consider the following 554-residue polypeptide: MFS-type transporter tstD (554 aa).

Composition is skewed to polar residues over residues 1–10 (MPEPFNSTMP) and 27–38 (QDSNQPPEMSAS). The tract at residues 1-68 (MPEPFNSTMP…ESENNEPYSV (68 aa)) is disordered. N6 carries N-linked (GlcNAc...) asparagine glycosylation. A compositionally biased stretch (basic and acidic residues) spans 39 to 48 (SEKKHPENEN). A helical membrane pass occupies residues 76–96 (LMVLAASLAGFFSPLSASIYY). N-linked (GlcNAc...) asparagine glycans are attached at residues N107 and N114. The next 5 membrane-spanning stretches (helical) occupy residues 115–135 (LTVTTYLILQGLAPMVTASFS), 142–162 (PGYAICFIVYLAANLGLALQN), 173–193 (LQSAGSSGAIAIANGVVSDII), 202–222 (IAFASVGSILGPSLSPIIGGL), and 231–251 (WIFWFLLIFSGAFCVPFFLFF). The disordered stretch occupies residues 281-300 (KEKQRQQRAENEEENANRQR). The next 3 helical transmembrane spans lie at 311 to 331 (VFVVFTNLQTVMTLCPAGVAF), 354 to 374 (IKVALIFLPMGVGGLISALST), and 413 to 433 (IALPVFCLGCVCTVLYGWLMT). N437 is a glycosylation site (N-linked (GlcNAc...) asparagine). The next 3 membrane-spanning stretches (helical) occupy residues 442 to 462 (IILLFVMSWSFAAFYQVLNVL), 473 to 493 (MVTAVVNLLRCEIGAGMAAMI), and 504 to 524 (WSYTIIALIGVAATSPLLLTM).

This sequence belongs to the major facilitator superfamily.

The protein resides in the membrane. Functionally, MFS-type transporter; part of the gene cluster that mediates the biosynthesis of the antihypercholesterolemic agents phomoidrides which are dimeric anhydrides. The protein is MFS-type transporter tstD of Talaromyces stipitatus (strain ATCC 10500 / CBS 375.48 / QM 6759 / NRRL 1006) (Penicillium stipitatum).